The chain runs to 1088 residues: DNA polymerase II large subunit (1088 aa).

The protein belongs to the archaeal DNA polymerase II family. As to quaternary structure, heterodimer of a large subunit and a small subunit.

It catalyses the reaction DNA(n) + a 2'-deoxyribonucleoside 5'-triphosphate = DNA(n+1) + diphosphate. The enzyme catalyses Exonucleolytic cleavage in the 3'- to 5'-direction to yield nucleoside 5'-phosphates.. In terms of biological role, possesses two activities: a DNA synthesis (polymerase) and an exonucleolytic activity that degrades single-stranded DNA in the 3'- to 5'-direction. Has a template-primer preference which is characteristic of a replicative DNA polymerase. The polypeptide is DNA polymerase II large subunit (polC) (Thermoplasma volcanium (strain ATCC 51530 / DSM 4299 / JCM 9571 / NBRC 15438 / GSS1)).